The sequence spans 67 residues: Small ribosomal subunit protein bS21 (67 aa).

The protein belongs to the bacterial ribosomal protein bS21 family.

This chain is Small ribosomal subunit protein bS21, found in Nitratidesulfovibrio vulgaris (strain DP4) (Desulfovibrio vulgaris).